The sequence spans 353 residues: tRNA U34 carboxymethyltransferase (353 aa).

Carboxy-S-adenosyl-L-methionine contacts are provided by residues lysine 101, tryptophan 119, lysine 124, glycine 144, 166–168 (DPS), 207–208 (LE), methionine 227, tyrosine 231, and arginine 346.

This sequence belongs to the class I-like SAM-binding methyltransferase superfamily. CmoB family. In terms of assembly, homotetramer.

It carries out the reaction carboxy-S-adenosyl-L-methionine + 5-hydroxyuridine(34) in tRNA = 5-carboxymethoxyuridine(34) in tRNA + S-adenosyl-L-homocysteine + H(+). Its function is as follows. Catalyzes carboxymethyl transfer from carboxy-S-adenosyl-L-methionine (Cx-SAM) to 5-hydroxyuridine (ho5U) to form 5-carboxymethoxyuridine (cmo5U) at position 34 in tRNAs. This is tRNA U34 carboxymethyltransferase from Psychrobacter sp. (strain PRwf-1).